A 271-amino-acid polypeptide reads, in one-letter code: Secretagogin (271 aa).

6 consecutive EF-hand domains span residues L8–K43, K53–N88, D100–Q135, K144–F179, E192–L227, and V235–P271. Ca(2+) is bound by residues D21, D23, N25, Y27, and E32. Residues D113, D115, S117, E124, N159, D161, R163, D168, D205, S207, T209, E216, D249, N251, D253, K255, and E260 each coordinate Ca(2+).

Its subcellular location is the cytoplasm. In Xenopus laevis (African clawed frog), this protein is Secretagogin (scgn).